Consider the following 614-residue polypeptide: Aspartate--tRNA ligase (614 aa).

An L-aspartate-binding site is contributed by glutamate 174. An aspartate region spans residues 198–201 (QLFK). Arginine 220 contacts L-aspartate. ATP is bound by residues 220–222 (RDE) and glutamine 229. Residue histidine 448 participates in L-aspartate binding. ATP is bound at residue glutamate 482. Arginine 489 serves as a coordination point for L-aspartate. An ATP-binding site is contributed by 534 to 537 (GLDR).

This sequence belongs to the class-II aminoacyl-tRNA synthetase family. Type 1 subfamily. Homodimer.

It localises to the cytoplasm. It catalyses the reaction tRNA(Asp) + L-aspartate + ATP = L-aspartyl-tRNA(Asp) + AMP + diphosphate. Catalyzes the attachment of L-aspartate to tRNA(Asp) in a two-step reaction: L-aspartate is first activated by ATP to form Asp-AMP and then transferred to the acceptor end of tRNA(Asp). In Lactobacillus acidophilus (strain ATCC 700396 / NCK56 / N2 / NCFM), this protein is Aspartate--tRNA ligase.